The primary structure comprises 319 residues: Phospho-N-acetylmuramoyl-pentapeptide-transferase (319 aa).

A run of 10 helical transmembrane segments spans residues 1–21 (MSIL…FLLM), 53–73 (TMGG…VGAW), 77–97 (LNGT…IGMW), 117–137 (FLAQ…EGFQ), 140–160 (FGLT…MVGF), 172–192 (GLVT…ALVQ), 195–215 (TEVA…FPFN), 221–241 (IFMG…VALV), 249–269 (LIIG…VAYF), and 298–318 (GVFW…ILFL).

The protein belongs to the glycosyltransferase 4 family. MraY subfamily. The cofactor is Mg(2+).

The protein localises to the cell membrane. It catalyses the reaction UDP-N-acetyl-alpha-D-muramoyl-L-alanyl-gamma-D-glutamyl-L-lysyl-D-alanyl-D-alanine + di-trans,octa-cis-undecaprenyl phosphate = Mur2Ac(oyl-L-Ala-gamma-D-Glu-L-Lys-D-Ala-D-Ala)-di-trans,octa-cis-undecaprenyl diphosphate + UMP. Its pathway is cell wall biogenesis; peptidoglycan biosynthesis. Functionally, catalyzes the initial step of the lipid cycle reactions in the biosynthesis of the cell wall peptidoglycan: transfers peptidoglycan precursor phospho-MurNAc-pentapeptide from UDP-MurNAc-pentapeptide onto the lipid carrier undecaprenyl phosphate, yielding undecaprenyl-pyrophosphoryl-MurNAc-pentapeptide, known as lipid I. The sequence is that of Phospho-N-acetylmuramoyl-pentapeptide-transferase from Limosilactobacillus fermentum (strain NBRC 3956 / LMG 18251) (Lactobacillus fermentum).